Consider the following 133-residue polypeptide: Beta-synuclein (133 aa).

Repeat copies occupy residues 20–30 and 31–41. The 4 X 11 AA tandem repeats of [EGS]-K-T-K-[EQ]-[GQ]-V-X(4) stretch occupies residues 20–66; sequence EKTKQGVTEAAEKTKEGVLYVGSKTSGVVQGVASVAEKTKEQASHLG. Residues 42–55 form a 3; approximate repeat; sequence SKTSGVVQGVASVA. A Phosphoserine modification is found at S45. Repeat unit 4 spans residues 56–66; sequence EKTKEQASHLG. Residues 96-133 are disordered; the sequence is EVAQEAAEEPLIEPLMEPEGESYEDSPQEEYQEYEPEA. A compositionally biased stretch (acidic residues) spans 97–133; sequence VAQEAAEEPLIEPLMEPEGESYEDSPQEEYQEYEPEA. Phosphoserine; by BARK1, CK2 and GRK5 is present on S117.

Belongs to the synuclein family. Post-translationally, phosphorylated. Phosphorylation by G-protein coupled receptor kinases (GRK) is more efficient than phosphorylation by CK1, CK2 and CaM-kinase II. Highly expressed in the brain.

The protein resides in the cytoplasm. May be involved in neuronal plasticity. The protein is Beta-synuclein (Sncb) of Mus musculus (Mouse).